We begin with the raw amino-acid sequence, 243 residues long: MYIIAHRGASGYAPENTIAAFDLAVKMNADMIELDVQLTKDRQIVVIHDDRVDRTTNGSGFVKDFTLEELQKLDAGSWYGPAFQGERIPTLEAVLKRYHKKIGLLIELKGHPSQVGIEEEVGQLLGQFSFSINNIVQSFQFRSVQRFRELYPSIPTAVITRPNFGMLSRNQMKAFRSFANYVNIKHTRLNRLMIGSINKNGLNIFAWTVNNQKTAAKLQAMGVDGIVTDYPDFIIKDGKHENI.

Residues 1 to 238 (MYIIAHRGAS…DYPDFIIKDG (238 aa)) enclose the GP-PDE domain. The Proton acceptor role is filled by histidine 6. Positions 33 and 35 each coordinate Ca(2+). Histidine 48 (proton donor) is an active-site residue. Position 107 (glutamate 107) interacts with Ca(2+).

The protein belongs to the glycerophosphoryl diester phosphodiesterase family. Ca(2+) is required as a cofactor.

It catalyses the reaction a sn-glycero-3-phosphodiester + H2O = an alcohol + sn-glycerol 3-phosphate + H(+). In terms of biological role, glycerophosphodiester phosphodiesterase hydrolyzes glycerophosphodiesters into glycerol-3-phosphate (G3P) and the corresponding alcohol. This chain is Putative glycerophosphodiester phosphodiesterase YhdW (yhdW), found in Bacillus subtilis (strain 168).